We begin with the raw amino-acid sequence, 311 residues long: Methionyl-tRNA formyltransferase (311 aa).

112–115 serves as a coordination point for (6S)-5,6,7,8-tetrahydrofolate; sequence SLLP.

This sequence belongs to the Fmt family.

The enzyme catalyses L-methionyl-tRNA(fMet) + (6R)-10-formyltetrahydrofolate = N-formyl-L-methionyl-tRNA(fMet) + (6S)-5,6,7,8-tetrahydrofolate + H(+). Its function is as follows. Attaches a formyl group to the free amino group of methionyl-tRNA(fMet). The formyl group appears to play a dual role in the initiator identity of N-formylmethionyl-tRNA by promoting its recognition by IF2 and preventing the misappropriation of this tRNA by the elongation apparatus. The polypeptide is Methionyl-tRNA formyltransferase (Bradyrhizobium sp. (strain ORS 278)).